A 309-amino-acid polypeptide reads, in one-letter code: L-aminoadipate-semialdehyde dehydrogenase-phosphopantetheinyl transferase (309 aa).

Residues arginine 47, 86-91 (RTSKGK), and 108-111 (NISH) each bind CoA. Residues aspartate 129 and glutamate 181 each contribute to the Mg(2+) site. 181-185 (ESFIK) is a CoA binding site.

It belongs to the P-Pant transferase superfamily. AcpS family. In terms of assembly, monomer. The cofactor is Mg(2+).

It is found in the cytoplasm. Its subcellular location is the cytosol. It catalyses the reaction apo-[ACP] + CoA = holo-[ACP] + adenosine 3',5'-bisphosphate + H(+). The enzyme catalyses apo-[ACP] + acetyl-CoA = acetyl-[ACP] + adenosine 3',5'-bisphosphate + H(+). Catalyzes the post-translational modification of target proteins by phosphopantetheine. Can transfer the 4'-phosphopantetheine moiety from coenzyme A, regardless of whether the CoA is presented in the free thiol form or as an acetyl thioester, to a serine residue of a broad range of acceptors including the acyl carrier domain of FASN. In Rattus norvegicus (Rat), this protein is L-aminoadipate-semialdehyde dehydrogenase-phosphopantetheinyl transferase (Aasdhppt).